A 309-amino-acid chain; its full sequence is Aspartate carbamoyltransferase catalytic subunit (309 aa).

The carbamoyl phosphate site is built by Arg-58 and Thr-59. Lys-86 provides a ligand contact to L-aspartate. Arg-108, His-136, and Gln-139 together coordinate carbamoyl phosphate. Positions 169 and 223 each coordinate L-aspartate. 2 residues coordinate carbamoyl phosphate: Gly-265 and Pro-266.

The protein belongs to the aspartate/ornithine carbamoyltransferase superfamily. ATCase family. Heterododecamer (2C3:3R2) of six catalytic PyrB chains organized as two trimers (C3), and six regulatory PyrI chains organized as three dimers (R2).

It carries out the reaction carbamoyl phosphate + L-aspartate = N-carbamoyl-L-aspartate + phosphate + H(+). It participates in pyrimidine metabolism; UMP biosynthesis via de novo pathway; (S)-dihydroorotate from bicarbonate: step 2/3. Catalyzes the condensation of carbamoyl phosphate and aspartate to form carbamoyl aspartate and inorganic phosphate, the committed step in the de novo pyrimidine nucleotide biosynthesis pathway. The sequence is that of Aspartate carbamoyltransferase catalytic subunit from Akkermansia muciniphila (strain ATCC BAA-835 / DSM 22959 / JCM 33894 / BCRC 81048 / CCUG 64013 / CIP 107961 / Muc).